Consider the following 208-residue polypeptide: ATP-dependent Clp protease proteolytic subunit (208 aa).

The active-site Nucleophile is the Ser-98. His-123 is an active-site residue.

This sequence belongs to the peptidase S14 family. In terms of assembly, fourteen ClpP subunits assemble into 2 heptameric rings which stack back to back to give a disk-like structure with a central cavity, resembling the structure of eukaryotic proteasomes.

It is found in the cytoplasm. The catalysed reaction is Hydrolysis of proteins to small peptides in the presence of ATP and magnesium. alpha-casein is the usual test substrate. In the absence of ATP, only oligopeptides shorter than five residues are hydrolyzed (such as succinyl-Leu-Tyr-|-NHMec, and Leu-Tyr-Leu-|-Tyr-Trp, in which cleavage of the -Tyr-|-Leu- and -Tyr-|-Trp bonds also occurs).. Cleaves peptides in various proteins in a process that requires ATP hydrolysis. Has a chymotrypsin-like activity. Plays a major role in the degradation of misfolded proteins. In Wolbachia pipientis subsp. Culex pipiens (strain wPip), this protein is ATP-dependent Clp protease proteolytic subunit.